The primary structure comprises 459 residues: Bifunctional protein GlmU (459 aa).

The interval 1–230 (MVKRYAVILA…FDETIGINDR (230 aa)) is pyrophosphorylase. Residues 9 to 12 (LAAG), lysine 23, glutamine 73, and 78 to 79 (GT) contribute to the UDP-N-acetyl-alpha-D-glucosamine site. Aspartate 103 lines the Mg(2+) pocket. UDP-N-acetyl-alpha-D-glucosamine contacts are provided by glycine 140, glutamate 155, asparagine 170, and asparagine 228. Mg(2+) is bound at residue asparagine 228. The tract at residues 231-251 (IALAEAERIMRDRICRQHMKN) is linker. The N-acetyltransferase stretch occupies residues 252 to 459 (GVTIIDPACT…VDRLRGKKKS (208 aa)). Positions 333 and 351 each coordinate UDP-N-acetyl-alpha-D-glucosamine. Histidine 363 functions as the Proton acceptor in the catalytic mechanism. Residues tyrosine 366 and asparagine 377 each coordinate UDP-N-acetyl-alpha-D-glucosamine. Residues 386-387 (NY), alanine 423, and arginine 440 contribute to the acetyl-CoA site.

In the N-terminal section; belongs to the N-acetylglucosamine-1-phosphate uridyltransferase family. It in the C-terminal section; belongs to the transferase hexapeptide repeat family. As to quaternary structure, homotrimer. The cofactor is Mg(2+).

It is found in the cytoplasm. The catalysed reaction is alpha-D-glucosamine 1-phosphate + acetyl-CoA = N-acetyl-alpha-D-glucosamine 1-phosphate + CoA + H(+). It catalyses the reaction N-acetyl-alpha-D-glucosamine 1-phosphate + UTP + H(+) = UDP-N-acetyl-alpha-D-glucosamine + diphosphate. It participates in nucleotide-sugar biosynthesis; UDP-N-acetyl-alpha-D-glucosamine biosynthesis; N-acetyl-alpha-D-glucosamine 1-phosphate from alpha-D-glucosamine 6-phosphate (route II): step 2/2. It functions in the pathway nucleotide-sugar biosynthesis; UDP-N-acetyl-alpha-D-glucosamine biosynthesis; UDP-N-acetyl-alpha-D-glucosamine from N-acetyl-alpha-D-glucosamine 1-phosphate: step 1/1. Its pathway is bacterial outer membrane biogenesis; LPS lipid A biosynthesis. In terms of biological role, catalyzes the last two sequential reactions in the de novo biosynthetic pathway for UDP-N-acetylglucosamine (UDP-GlcNAc). The C-terminal domain catalyzes the transfer of acetyl group from acetyl coenzyme A to glucosamine-1-phosphate (GlcN-1-P) to produce N-acetylglucosamine-1-phosphate (GlcNAc-1-P), which is converted into UDP-GlcNAc by the transfer of uridine 5-monophosphate (from uridine 5-triphosphate), a reaction catalyzed by the N-terminal domain. The sequence is that of Bifunctional protein GlmU from Geobacillus thermodenitrificans (strain NG80-2).